Consider the following 404-residue polypeptide: Sulfate adenylyltransferase (404 aa).

Belongs to the sulfate adenylyltransferase family.

The enzyme catalyses sulfate + ATP + H(+) = adenosine 5'-phosphosulfate + diphosphate. It functions in the pathway sulfur metabolism; hydrogen sulfide biosynthesis; sulfite from sulfate: step 1/3. In Chlorobaculum tepidum (strain ATCC 49652 / DSM 12025 / NBRC 103806 / TLS) (Chlorobium tepidum), this protein is Sulfate adenylyltransferase.